Reading from the N-terminus, the 180-residue chain is Cell division protein ZapC (180 aa).

The protein belongs to the ZapC family. Interacts directly with FtsZ.

The protein localises to the cytoplasm. In terms of biological role, contributes to the efficiency of the cell division process by stabilizing the polymeric form of the cell division protein FtsZ. Acts by promoting interactions between FtsZ protofilaments and suppressing the GTPase activity of FtsZ. This chain is Cell division protein ZapC, found in Vibrio cholerae serotype O1 (strain ATCC 39315 / El Tor Inaba N16961).